Consider the following 488-residue polypeptide: RNA binding exosome specificity factor Mmi1 (488 aa).

3 stretches are compositionally biased toward polar residues: residues 1–14 (MSNT…SSKS), 33–47 (LNES…TTHT), and 54–66 (SVLS…NFSS). Disordered stretches follow at residues 1–20 (MSNT…ELPN) and 25–80 (RSLW…DAPI). Over residues 71–80 (PAPESHDAPI) the composition is skewed to basic and acidic residues. Residues 95–122 (GKYDFSRHCTDYGHSYEWPYFRSLRRES) are interaction with erh1. Disordered stretches follow at residues 163–185 (SRLH…RRLA) and 225–261 (SYPV…TRAS). At Thr-176 the chain carries Phosphothreonine. Residues Ser-178, Ser-230, Ser-231, Ser-261, Ser-263, and Ser-265 each carry the phosphoserine modification. Residues 289–299 (SYLLSNSSNDS) are compositionally biased toward low complexity. The interval 289–328 (SYLLSNSSNDSASRKEKPKARASTPPPLNFSRASEHRNEK) is disordered. Phosphoserine is present on Ser-311. Thr-312 carries the post-translational modification Phosphothreonine. The 127-residue stretch at 350 to 476 (SRYFIMLCDN…DEGSRLCTLI (127 aa)) folds into the YTH domain.

As to quaternary structure, component of the erh1-mmi1 complex composed of mmi1 and erh1. Interacts (via N-terminus) with erh1 in a 2:2 stoichiometry. Interacts with rrp6.

The protein localises to the nucleus. Its function is as follows. RNA-binding protein that recognizes and binds N6-methyladenosine (m6A)-containing RNAs, a modification present at internal sites of mRNAs and some non-coding RNAs. Functions alone and as part of the erh1-mmi1 complex, to recruit the CCR4-NOT complex and the NURS complex to target RNAs. Suppresses the meiotic program during vegetative growth and promotes the meiotic program during mating. Binds to DSR (determinant of selective removal) regions in meiotic mRNA, and recruits the NURS complex to targets. Recruitment of NURS complex to target mRNAs promotes mRNA decay by engagement of the nuclear exosome, and formation of heterochromatin islands at meiotic genes silenced by the exosome. Recruitment of the CCR4-NOT complex to target RNAs promotes heterochromatin formation at RNAi-dependent heterochromatin domains (HOODs), including a subset of meiotic genes, lncRNAs and retrotransposons. Recruitment of the CCR4-NOT complex to rDNA promotes rDNA heterochromatin assembly. Promotes non-canonical transcription termination at meiotic genes and prevents lncRNA transcription from invading and repressing adjacent genes. The protein is RNA binding exosome specificity factor Mmi1 (mmi1) of Schizosaccharomyces pombe (strain 972 / ATCC 24843) (Fission yeast).